The sequence spans 338 residues: UPF0252 protein PF1496 (338 aa).

Residues 100–120 traverse the membrane as a helical segment; sequence ILSMLFLVFILFPAFTSHIWS.

This sequence belongs to the UPF0252 family.

Its subcellular location is the membrane. The chain is UPF0252 protein PF1496 from Pyrococcus furiosus (strain ATCC 43587 / DSM 3638 / JCM 8422 / Vc1).